Here is a 131-residue protein sequence, read N- to C-terminus: Ribonuclease VapC30 (131 aa).

The region spanning 1–129 (MVIDTSALVA…FQHTDIATVA (129 aa)) is the PINc domain. 2 residues coordinate Mg(2+): Asp4 and Asp99.

The protein belongs to the PINc/VapC protein family. The cofactor is Mg(2+).

Its function is as follows. Toxic component of a type II toxin-antitoxin (TA) system. An RNase. Its toxic effect is neutralized by coexpression with cognate antitoxin VapB30. The polypeptide is Ribonuclease VapC30 (Mycobacterium tuberculosis (strain CDC 1551 / Oshkosh)).